The primary structure comprises 38 residues: Mu-hexatoxin-Mg1b (38 aa).

3 cysteine pairs are disulfide-bonded: cysteine 1/cysteine 15, cysteine 8/cysteine 20, and cysteine 14/cysteine 34. Residue serine 38 is modified to Serine amide.

It belongs to the neurotoxin 14 (magi-1) family. 09 (magi-1) subfamily. As to expression, expressed by the venom gland.

Its subcellular location is the secreted. In terms of biological role, insecticidal neurotoxin. Shows competition for site 3 of insect voltage-gated sodium channels (Nav). This is Mu-hexatoxin-Mg1b from Macrothele gigas (Japanese funnel web spider).